A 556-amino-acid chain; its full sequence is MKTDIEIAQEAKMEPIVKIAEKIGLNEDDIDLYGKYKCKISLDVLKQNKNKQDGKLVLVTAINPTPAGEGKSTVTVGLGEALCKMNKNTVIALREPSLGPVFGIKGGAAGGGYAQVVPMEDINLHFTGDMHAITSANNLLCAAIDNHIHQGNSLKIDQRRIVFKRVMDMNDRALRSIVVGLGGKVNGFPREDGFMITVASEIMAILCLANDLMDLKERMGKILIAYDLDGNPVYCRDLKVEGAMAMLMKDAMKPNLVQTLENTPAIIHGGPFANIAHGCNSILATKMALKLGDYVITEAGFGADLGAEKFLDIKCRYGNLNPDCVVLVATIRALKHHGGALKEDLSKPNAKVLEKGLSNLGKQIENIKKYGVPVVVAINKFITDSEEEIKCIEEYCSKQGVKVSLTEVWEKGGEGGTDLANKVLDTLENEKSNFKYLYDEKLSIKEKMDIIAKEIYGADGVQYTPQANKQIKEIEKFNLDKLPICVAKTQYSLSDNPALLGRPTNFTINVKEVRVSNGAGFVVVQTGNIMTMPGLPKTPAANKMDIFEDGSIVGLF.

T65–S72 serves as a coordination point for ATP.

The protein belongs to the formate--tetrahydrofolate ligase family.

It catalyses the reaction (6S)-5,6,7,8-tetrahydrofolate + formate + ATP = (6R)-10-formyltetrahydrofolate + ADP + phosphate. It functions in the pathway one-carbon metabolism; tetrahydrofolate interconversion. The sequence is that of Formate--tetrahydrofolate ligase from Clostridium acetobutylicum (strain ATCC 824 / DSM 792 / JCM 1419 / IAM 19013 / LMG 5710 / NBRC 13948 / NRRL B-527 / VKM B-1787 / 2291 / W).